The chain runs to 585 residues: MARPDPSAPPSLLLLLLAQLVGRAAAASKAPVCQEITVPMCRGIGYNLTHMPNQFNHDTQDEAGLEVHQFWPLVEIHCSPDLRFFLCSMYTPICLPDYHKPLPPCRSVCERAKAGCSPLMRQYGFAWPERMSCDRLPVLGGDAEVLCMDYNRSEATTASPKSFPAKPTLPGPPGAPSSGGECPSGGPSVCTCREPFVPILKESHPLYNKVRTGQVPNCAVPCYQPSFSPDERTFATFWIGLWSVLCFISTSTTVATFLIDMERFRYPERPIIFLSACYLCVSLGFLVRLVVGHASVACSREHSHIHYETTGPALCTVVFLLVYFFGMASSIWWVILSLTWFLAAGMKWGNEAIAGYAQYFHLAAWLIPSVKSITALALSSVDGDPVAGVCYVGNQNLNSLRGFVLGPLVLYLLVGTLFLLAGFVSLFRIRSVIKQGGTKTDKLEKLMIRIGIFTLLYTVPASIVVACYLYEQHYRESWEAALTCACPGSDAGQPRAKPEYWVLMLKYFMCLVVGITSGVWIWSGKTLESWRRFTSRCCCSSRRGHKSGGAMVAGDYAEASAALTGRTGPPGPAAAYHKQVSLSHV.

Residues 1 to 26 (MARPDPSAPPSLLLLLLAQLVGRAAA) form the signal peptide. At 27 to 238 (ASKAPVCQEI…PDERTFATFW (212 aa)) the chain is on the extracellular side. One can recognise an FZ domain in the interval 28-150 (SKAPVCQEIT…GDAEVLCMDY (123 aa)). Intrachain disulfides connect cysteine 33/cysteine 94, cysteine 41/cysteine 87, cysteine 78/cysteine 116, cysteine 105/cysteine 147, and cysteine 109/cysteine 133. Residue asparagine 47 is glycosylated (N-linked (GlcNAc...) asparagine). N-linked (GlcNAc...) asparagine glycosylation occurs at asparagine 151. The tract at residues 156 to 182 (TTASPKSFPAKPTLPGPPGAPSSGGEC) is disordered. Residues 239 to 259 (IGLWSVLCFISTSTTVATFLI) traverse the membrane as a helical segment. Residues 260-270 (DMERFRYPERP) lie on the Cytoplasmic side of the membrane. A helical membrane pass occupies residues 271-291 (IIFLSACYLCVSLGFLVRLVV). Residues 292–315 (GHASVACSREHSHIHYETTGPALC) lie on the Extracellular side of the membrane. Residues 316–336 (TVVFLLVYFFGMASSIWWVIL) traverse the membrane as a helical segment. Over 337–358 (SLTWFLAAGMKWGNEAIAGYAQ) the chain is Cytoplasmic. Residues 359-379 (YFHLAAWLIPSVKSITALALS) traverse the membrane as a helical segment. Topologically, residues 380–402 (SVDGDPVAGVCYVGNQNLNSLRG) are extracellular. Residues 403 to 423 (FVLGPLVLYLLVGTLFLLAGF) traverse the membrane as a helical segment. Topologically, residues 424 to 449 (VSLFRIRSVIKQGGTKTDKLEKLMIR) are cytoplasmic. A helical transmembrane segment spans residues 450-470 (IGIFTLLYTVPASIVVACYLY). Topologically, residues 471-500 (EQHYRESWEAALTCACPGSDAGQPRAKPEY) are extracellular. A helical transmembrane segment spans residues 501–521 (WVLMLKYFMCLVVGITSGVWI). At 522-585 (WSGKTLESWR…YHKQVSLSHV (64 aa)) the chain is on the cytoplasmic side. The Lys-Thr-X-X-X-Trp motif, mediates interaction with the PDZ domain of Dvl family members signature appears at 525-530 (KTLESW). The PDZ-binding signature appears at 583–585 (SHV).

The protein belongs to the G-protein coupled receptor Fz/Smo family. As to quaternary structure, binding of unsaturated fatty acid molecules (via FZ domain) promotes homodimerization (via FZ domain). Interacts with WNT2B. Interacts with WNT7A. Interacts with GOPC. Post-translationally, ubiquitinated by RNF43 and ZNRF3, leading to its degradation by the proteasome.

It localises to the cell membrane. The protein resides in the golgi apparatus membrane. It is found in the synapse. The protein localises to the perikaryon. Its subcellular location is the cell projection. It localises to the dendrite. The protein resides in the axon. In terms of biological role, receptor for Wnt proteins. Functions in the canonical Wnt/beta-catenin signaling pathway. In vitro activates WNT2, WNT10B, WNT5A, but not WNT2B or WNT4 signaling. In neurons, activation by WNT7A promotes formation of synapses. May be involved in transduction and intercellular transmission of polarity information during tissue morphogenesis and/or in differentiated tissues. Plays a role in yolk sac angiogenesis and in placental vascularization. Plays a role in ocular development. The chain is Frizzled-5 (Fzd5) from Rattus norvegicus (Rat).